Reading from the N-terminus, the 484-residue chain is Coronin-1B (484 aa).

Phosphoserine is present on Ser-2. WD repeat units follow at residues 80–120 (GHTG…LTSP), 130–170 (GHTK…ELYR), 174–213 (LHPDLIYNVSWNHNGSLFCSACKDKSVRIIDPRRGTLVAE), 217–260 (AHEG…EPMA), and 265–305 (DSSN…PYIH). The interval 404 to 446 (LKVSRRNVLSDSRPASYSRSGASTATAVTDVPSGNLAGAGEAG) is disordered. Polar residues predominate over residues 410–430 (NVLSDSRPASYSRSGASTATA). A coiled-coil region spans residues 444–482 (EAGKLEEVMQELRALRMLVKEQGERISRLEEQLGRMENG).

Belongs to the WD repeat coronin family. As to quaternary structure, forms homooligomers, but does not form complexes with the other coronins. Interacts with Arp2/3 complex components, including ACTR2, ARPC1B and ARPC2. Binds actin. Phosphorylation on Ser-2 regulates the interaction with the Arp2/3 complex and cell motility in fibroblasts. Phosphorylation does not seem to affect subcellular location. As to expression, ubiquitous.

It localises to the cytoplasm. It is found in the cytoskeleton. The protein resides in the stress fiber. Its function is as follows. Regulates leading edge dynamics and cell motility in fibroblasts. May be involved in cytokinesis and signal transduction. The chain is Coronin-1B (Coro1b) from Mus musculus (Mouse).